A 93-amino-acid chain; its full sequence is Exodeoxyribonuclease 7 small subunit (93 aa).

Positions 1–22 are disordered; sequence MAKTASPGATPPGNGAEPLPDN.

This sequence belongs to the XseB family. As to quaternary structure, heterooligomer composed of large and small subunits.

Its subcellular location is the cytoplasm. The enzyme catalyses Exonucleolytic cleavage in either 5'- to 3'- or 3'- to 5'-direction to yield nucleoside 5'-phosphates.. Its function is as follows. Bidirectionally degrades single-stranded DNA into large acid-insoluble oligonucleotides, which are then degraded further into small acid-soluble oligonucleotides. The polypeptide is Exodeoxyribonuclease 7 small subunit (Burkholderia multivorans (strain ATCC 17616 / 249)).